The chain runs to 130 residues: Small ribosomal subunit protein uS8 (130 aa).

It belongs to the universal ribosomal protein uS8 family. Part of the 30S ribosomal subunit. Contacts proteins S5 and S12.

One of the primary rRNA binding proteins, it binds directly to 16S rRNA central domain where it helps coordinate assembly of the platform of the 30S subunit. The polypeptide is Small ribosomal subunit protein uS8 (Shewanella piezotolerans (strain WP3 / JCM 13877)).